A 335-amino-acid polypeptide reads, in one-letter code: MQVLVNKIWYEGHPLRWLLLPFSVLFALITAIRRSLFRLGLKSQTPLPVPVIVVGNITVGGSGKTPTVIYLIELLRQQGFNPGVISRGYGADIQGVKVVTAADSAASVGDEPAMIVARTGVPMVVGAKRVDTAKALLAQFAVDVIICDDGLQHYALGRDIELVVIDGKRGLGNRHLLPAGPLREGAWRLNQVDFVVVNGGPAQANQYEMQLSPSAVLPVNPKAVAVFDPTQPVVAMAGIGHPARFFETLTQQGFQLALSHGFDDHQAYDKEVLCELAASRPLMMTEKDAVKCRDFAQENWWYLAVDAKLSPQFDQQLLSRVRSVAAAKQGKSHGV.

An ATP-binding site is contributed by 58 to 65; that stretch reads TVGGSGKT.

This sequence belongs to the LpxK family.

It catalyses the reaction a lipid A disaccharide + ATP = a lipid IVA + ADP + H(+). It functions in the pathway glycolipid biosynthesis; lipid IV(A) biosynthesis; lipid IV(A) from (3R)-3-hydroxytetradecanoyl-[acyl-carrier-protein] and UDP-N-acetyl-alpha-D-glucosamine: step 6/6. Transfers the gamma-phosphate of ATP to the 4'-position of a tetraacyldisaccharide 1-phosphate intermediate (termed DS-1-P) to form tetraacyldisaccharide 1,4'-bis-phosphate (lipid IVA). This Shewanella sp. (strain MR-7) protein is Tetraacyldisaccharide 4'-kinase.